The sequence spans 252 residues: Phosphatidylserine decarboxylase proenzyme (252 aa).

The active-site Schiff-base intermediate with substrate; via pyruvic acid is the serine 211. Position 211 is a pyruvic acid (Ser); by autocatalysis (serine 211).

It belongs to the phosphatidylserine decarboxylase family. PSD-A subfamily. Heterodimer of a large membrane-associated beta subunit and a small pyruvoyl-containing alpha subunit. It depends on pyruvate as a cofactor. Is synthesized initially as an inactive proenzyme. Formation of the active enzyme involves a self-maturation process in which the active site pyruvoyl group is generated from an internal serine residue via an autocatalytic post-translational modification. Two non-identical subunits are generated from the proenzyme in this reaction, and the pyruvate is formed at the N-terminus of the alpha chain, which is derived from the carboxyl end of the proenzyme. The post-translation cleavage follows an unusual pathway, termed non-hydrolytic serinolysis, in which the side chain hydroxyl group of the serine supplies its oxygen atom to form the C-terminus of the beta chain, while the remainder of the serine residue undergoes an oxidative deamination to produce ammonia and the pyruvoyl prosthetic group on the alpha chain.

The protein localises to the cell membrane. It catalyses the reaction a 1,2-diacyl-sn-glycero-3-phospho-L-serine + H(+) = a 1,2-diacyl-sn-glycero-3-phosphoethanolamine + CO2. The protein operates within phospholipid metabolism; phosphatidylethanolamine biosynthesis; phosphatidylethanolamine from CDP-diacylglycerol: step 2/2. In terms of biological role, catalyzes the formation of phosphatidylethanolamine (PtdEtn) from phosphatidylserine (PtdSer). The chain is Phosphatidylserine decarboxylase proenzyme from Novosphingobium aromaticivorans (strain ATCC 700278 / DSM 12444 / CCUG 56034 / CIP 105152 / NBRC 16084 / F199).